The following is a 488-amino-acid chain: UDP-N-acetylmuramoyl-L-alanyl-D-glutamate--2,6-diaminopimelate ligase (488 aa).

UDP-N-acetyl-alpha-D-muramoyl-L-alanyl-D-glutamate is bound by residues Leu24, Ser26, and 41–43 (HQV). Residue 113-119 (GTNGKTT) coordinates ATP. UDP-N-acetyl-alpha-D-muramoyl-L-alanyl-D-glutamate is bound by residues Asn154, 155–156 (TT), Ser182, Gln188, and Arg190. Lys222 bears the N6-carboxylysine mark. Residues Arg386, 410 to 413 (DNPR), Gly461, and Glu465 contribute to the meso-2,6-diaminopimelate site. A Meso-diaminopimelate recognition motif motif is present at residues 410-413 (DNPR).

Belongs to the MurCDEF family. MurE subfamily. Requires Mg(2+) as cofactor. Carboxylation is probably crucial for Mg(2+) binding and, consequently, for the gamma-phosphate positioning of ATP.

The protein localises to the cytoplasm. It carries out the reaction UDP-N-acetyl-alpha-D-muramoyl-L-alanyl-D-glutamate + meso-2,6-diaminopimelate + ATP = UDP-N-acetyl-alpha-D-muramoyl-L-alanyl-gamma-D-glutamyl-meso-2,6-diaminopimelate + ADP + phosphate + H(+). The protein operates within cell wall biogenesis; peptidoglycan biosynthesis. Functionally, catalyzes the addition of meso-diaminopimelic acid to the nucleotide precursor UDP-N-acetylmuramoyl-L-alanyl-D-glutamate (UMAG) in the biosynthesis of bacterial cell-wall peptidoglycan. This is UDP-N-acetylmuramoyl-L-alanyl-D-glutamate--2,6-diaminopimelate ligase from Haemophilus influenzae (strain PittEE).